The primary structure comprises 158 residues: UPF0735 ACT domain-containing protein Bsph_3944 (158 aa).

The region spanning 80–155 (TVFLQLQDRK…FVESAEVISS (76 aa)) is the ACT domain.

This sequence belongs to the UPF0735 family.

This chain is UPF0735 ACT domain-containing protein Bsph_3944, found in Lysinibacillus sphaericus (strain C3-41).